A 927-amino-acid chain; its full sequence is Disks large homolog 1 (927 aa).

The 61-residue stretch at 4–64 (RKQDTQRALH…FYEVTLLDNP (61 aa)) folds into the L27 domain. Threonine 115 is modified (phosphothreonine). Residues serine 122, serine 138, and serine 158 each carry the phosphoserine modification. Residues 162 to 212 (PTEAVPPSSPTVPVIPVLPVPAENTVILPTIPQANPPPVLVNTDSLETSTY) form an interaction with SH3 domains region. Positions 224-546 (EITLERGNSG…QAVTIVAQYR (323 aa)) are required for interaction with MARCHF2. PDZ domains lie at 230–317 (GNSG…SEKI), 325–412 (GPKG…YMND), and 474–555 (TGLG…RFEA). Residue serine 232 is modified to Phosphoserine. Phosphotyrosine is present on tyrosine 399. Phosphoserine occurs at positions 568, 573, 575, 579, 598, 619, 707, 710, and 857. One can recognise an SH3 domain in the interval 581 to 651 (KRSLYVRALF…PSKRRVEKKE (71 aa)). The Guanylate kinase-like domain maps to 683–858 (RKFPFYKNKD…ISIFIKPKSM (176 aa)). Residues 691-719 (KDQSEQETSDADQHITSNASDSESSYRGQ) form a disordered region. The span at 704 to 717 (HITSNASDSESSYR) shows a compositional bias: polar residues.

The protein belongs to the MAGUK family. In terms of assembly, homotetramer. Interacts (via guanylate kinase-like domain) with DLGAP1, DLGAP2, DLGAP3, DLGAP4 and MAP1A. Interacts (via guanylate kinase-like domain) with KIF13B. May interact with HTR2A. Interacts (via PDZ domains) with GRIA1. Interacts (via PDZ domains) with GRIN2A. Interacts (via PDZ domains) with KCND2 and KCND3. Interacts (via PDZ domains) with KCNA1, KCNA2, KCNA3 and KCNA4. Interacts (via PDZ domains) with ADGRA3. Interacts with KCNF1. Interacts with CAMK2. Interacts with cytoskeleton-associated protein EPB41. Interacts with cytoskeleton-associated protein EZR. Found in a complex with KCNA5 and CAV3. Found in a complex with APC and CTNNB1. Interacts (via PDZ domains) with APC. Interacts with CDH1 through binding to PIK3R1. Forms multiprotein complexes with CASK, LIN7A, LIN7B, LIN7C, APBA1, and KCNJ12. Interacts with TOPK. Forms a tripartite complex composed of DLG1, MPP7 and LIN7 (LIN7A or LIN7C). May interact with TJAP1. Interacts with PTEN. Interacts with FRMPD4 (via C-terminus). Interacts with LRFN1, LRFN2 and LRFN4. Interacts with SFPQ. Interacts (via PDZ domains) with ADGRA2 (via PDZ-binding motif). Interacts with ADAM10; this interaction recruits ADAM10 to the cell membrane during long-term depression in hippocampal neurons. Interacts with DGKI (via PDZ-binding motif). Interacts (via PDZ domains) with MARCHF2 (via PDZ domain); the interaction leads to DLG1 ubiqtuitination and degradation. Interacts (via N-terminus) with MPP3; this interaction connects CADM1 with DLG1 and links CADM1 with the regulatory subunit of phosphoinositide-3-kinase (PI3K) by forming a multiprotein complex and participates in cell spreading. In terms of processing, phosphorylated by MAPK12. Phosphorylation of Ser-232 regulates association with GRIN2A. Ubiquitinated; by MARCHF2 which results in its degradation.

It localises to the cell membrane. Its subcellular location is the basolateral cell membrane. The protein localises to the endoplasmic reticulum membrane. The protein resides in the postsynaptic density. It is found in the synapse. It localises to the sarcolemma. Its subcellular location is the apical cell membrane. The protein localises to the cell junction. The protein resides in the cytoplasm. Its function is as follows. Essential multidomain scaffolding protein required for normal development. Recruits channels, receptors and signaling molecules to discrete plasma membrane domains in polarized cells. Promotes epithelial cell layer barrier function via maintaining cell-cell adhesion. May also play a role in adherens junction assembly, signal transduction, cell proliferation, synaptogenesis and lymphocyte activation. Regulates the excitability of cardiac myocytes by modulating the functional expression of Kv4 channels. Functional regulator of Kv1.5 channel. During long-term depression in hippocampal neurons, it recruits ADAM10 to the plasma membrane. This chain is Disks large homolog 1 (DLG1), found in Canis lupus familiaris (Dog).